The sequence spans 269 residues: tRNA (guanine-N(7)-)-methyltransferase (269 aa).

Positions 1–38 are disordered; it reads MDGVNDAANHTVESVPGRPSTASAPLEAGRRSPTGSRL. S-adenosyl-L-methionine-binding residues include Glu91, Glu116, Asp143, and Asp166. Residue Asp166 is part of the active site. Substrate-binding positions include Lys170, Asp202, and 247-250; that span reads TKFE.

This sequence belongs to the class I-like SAM-binding methyltransferase superfamily. TrmB family.

The catalysed reaction is guanosine(46) in tRNA + S-adenosyl-L-methionine = N(7)-methylguanosine(46) in tRNA + S-adenosyl-L-homocysteine. The protein operates within tRNA modification; N(7)-methylguanine-tRNA biosynthesis. Functionally, catalyzes the formation of N(7)-methylguanine at position 46 (m7G46) in tRNA. This is tRNA (guanine-N(7)-)-methyltransferase from Nocardia farcinica (strain IFM 10152).